We begin with the raw amino-acid sequence, 288 residues long: ATP synthase gamma chain (288 aa).

The protein belongs to the ATPase gamma chain family. As to quaternary structure, F-type ATPases have 2 components, CF(1) - the catalytic core - and CF(0) - the membrane proton channel. CF(1) has five subunits: alpha(3), beta(3), gamma(1), delta(1), epsilon(1). CF(0) has three main subunits: a, b and c.

The protein localises to the cell inner membrane. Functionally, produces ATP from ADP in the presence of a proton gradient across the membrane. The gamma chain is believed to be important in regulating ATPase activity and the flow of protons through the CF(0) complex. The polypeptide is ATP synthase gamma chain (Glaesserella parasuis serovar 5 (strain SH0165) (Haemophilus parasuis)).